Consider the following 371-residue polypeptide: Cytochrome b (371 aa).

A run of 4 helical transmembrane segments spans residues 25 to 45 (FGSM…FLAV), 69 to 90 (WMMQ…YIHI), 105 to 125 (WLSG…XXXX), and 170 to 190 (XXXX…LHIM). Residues His75 and His89 each contribute to the heme b site. Heme b contacts are provided by Xaa174 and His188. An a ubiquinone-binding site is contributed by His193. A run of 4 helical transmembrane segments spans residues 218–238 (YKDL…VSFL), 280–300 (LGGA…PFTH), 312–332 (IMQL…WAAT), and 339–358 (FTMI…ITNP).

The protein belongs to the cytochrome b family. As to quaternary structure, the cytochrome bc1 complex contains 3 respiratory subunits (MT-CYB, CYC1 and UQCRFS1), 2 core proteins (UQCRC1 and UQCRC2) and probably 6 low-molecular weight proteins. It depends on heme b as a cofactor.

It localises to the mitochondrion inner membrane. In terms of biological role, component of the ubiquinol-cytochrome c reductase complex (complex III or cytochrome b-c1 complex) that is part of the mitochondrial respiratory chain. The b-c1 complex mediates electron transfer from ubiquinol to cytochrome c. Contributes to the generation of a proton gradient across the mitochondrial membrane that is then used for ATP synthesis. The polypeptide is Cytochrome b (MT-CYB) (Eryx jaculus (Javelin sand boa)).